The following is a 526-amino-acid chain: Probable feruloyl esterase B-2 (526 aa).

The N-terminal stretch at 1 to 18 (MTKLSLLPLLTLASAVLA) is a signal peptide. 2 disulfides stabilise this stretch: Cys-27/Cys-74 and Cys-62/Cys-113. N-linked (GlcNAc...) asparagine glycosylation is present at Asn-52. N-linked (GlcNAc...) asparagine glycosylation is present at Asn-137. Intrachain disulfides connect Cys-186–Cys-441, Cys-255–Cys-272, Cys-281–Cys-291, and Cys-503–Cys-525. Ser-187 acts as the Acyl-ester intermediate in catalysis. A glycan (N-linked (GlcNAc...) asparagine) is linked at Asn-233. Ca(2+)-binding residues include Asp-256, Asp-259, Ala-261, Asp-263, and Ile-265. The N-linked (GlcNAc...) asparagine glycan is linked to Asn-311. Residues Asp-400 and His-440 each act as charge relay system in the active site. The N-linked (GlcNAc...) asparagine glycan is linked to Asn-516.

This sequence belongs to the tannase family.

The protein localises to the secreted. It catalyses the reaction feruloyl-polysaccharide + H2O = ferulate + polysaccharide.. Involved in degradation of plant cell walls. Hydrolyzes the feruloyl-arabinose ester bond in arabinoxylans as well as the feruloyl-galactose and feruloyl-arabinose ester bonds in pectin. In Aspergillus fumigatus (strain CBS 144.89 / FGSC A1163 / CEA10) (Neosartorya fumigata), this protein is Probable feruloyl esterase B-2 (faeB-2).